The sequence spans 193 residues: Imidazoleglycerol-phosphate dehydratase (193 aa).

It belongs to the imidazoleglycerol-phosphate dehydratase family.

It localises to the cytoplasm. The catalysed reaction is D-erythro-1-(imidazol-4-yl)glycerol 3-phosphate = 3-(imidazol-4-yl)-2-oxopropyl phosphate + H2O. It functions in the pathway amino-acid biosynthesis; L-histidine biosynthesis; L-histidine from 5-phospho-alpha-D-ribose 1-diphosphate: step 6/9. This is Imidazoleglycerol-phosphate dehydratase from Methanospirillum hungatei JF-1 (strain ATCC 27890 / DSM 864 / NBRC 100397 / JF-1).